Consider the following 484-residue polypeptide: MAKTLAEKVWDAHVVRKGDGEGANAQPDLLYIDLHLVHEVTSPQAFEGLRLAGRPLRRPDLTIATEDHNTPTLDIDKPIADLTSRTQIQTLRNNCKEFGVRLHSLGDAEQGIVHVVGPQLGLTQPGMTVVCGDSHTSTHGAFGALAMGIGTSEVEHVMATQTLSLKPFKTMAINVEGTLRPGVSAKDIILAVIAKIGTGGGQGYVLEYRGSAIRALSMEARMTICNMSIEAGARAGLVAPDQTTYDYMYGRPHAPQGAEWDAAVEYWNTLRTDDDATFDVEVDLDADTLEPFVTWGTNPGQGVSLSSRVPSPEDFGDENAKAAAERALQYMGLEAGTPMKEIRVDTVFLGSCTNSRMEDLRAAADIIRGRTKDPNIRMLVVPGSARVRLEAEAEGLDKVFKDFGAEWRFAGCSMCLGMNPDQLEVGERCASTSNRNFEGRQGKGGRTHLVSPVVAAATAVRGTLSSPSDLDPAPESAAVSSSAA.

[4Fe-4S] cluster contacts are provided by Cys352, Cys412, and Cys415. The segment at 462 to 484 (GTLSSPSDLDPAPESAAVSSSAA) is disordered.

It belongs to the aconitase/IPM isomerase family. LeuC type 1 subfamily. In terms of assembly, heterodimer of LeuC and LeuD. The cofactor is [4Fe-4S] cluster.

The enzyme catalyses (2R,3S)-3-isopropylmalate = (2S)-2-isopropylmalate. Its pathway is amino-acid biosynthesis; L-leucine biosynthesis; L-leucine from 3-methyl-2-oxobutanoate: step 2/4. Its function is as follows. Catalyzes the isomerization between 2-isopropylmalate and 3-isopropylmalate, via the formation of 2-isopropylmaleate. This chain is 3-isopropylmalate dehydratase large subunit, found in Arthrobacter sp. (strain FB24).